Consider the following 557-residue polypeptide: Phosphoacetylglucosamine mutase (557 aa).

The Phosphoserine intermediate role is filled by Ser67. Residues Ser67, Asp298, Asp300, and Asp302 each contribute to the Mg(2+) site. Ser67 carries the post-translational modification Phosphoserine. Residues 395 to 397 (EAN), 522 to 526 (RASGT), and Arg531 contribute to the substrate site.

Belongs to the phosphohexose mutase family. Mg(2+) serves as cofactor.

The protein resides in the cytoplasm. The protein localises to the nucleus. The catalysed reaction is N-acetyl-alpha-D-glucosamine 1-phosphate = N-acetyl-D-glucosamine 6-phosphate. It functions in the pathway nucleotide-sugar biosynthesis; UDP-N-acetyl-alpha-D-glucosamine biosynthesis; N-acetyl-alpha-D-glucosamine 1-phosphate from alpha-D-glucosamine 6-phosphate (route I): step 2/2. Functionally, catalyzes the conversion of GlcNAc-6-P into GlcNAc-1-P during the synthesis of uridine diphosphate/UDP-GlcNAc, which is a biosynthetic precursor of chitin and also supplies the amino sugars for N-linked oligosaccharides of glycoproteins. Also has phosphoglucomutase activity. This Saccharomyces cerevisiae (strain ATCC 204508 / S288c) (Baker's yeast) protein is Phosphoacetylglucosamine mutase.